Consider the following 439-residue polypeptide: Xylose isomerase (439 aa).

Residues histidine 101 and aspartate 104 contribute to the active site. Residues glutamate 232, glutamate 268, histidine 271, aspartate 296, aspartate 307, aspartate 309, and aspartate 339 each coordinate Mg(2+).

This sequence belongs to the xylose isomerase family. Homotetramer. It depends on Mg(2+) as a cofactor.

It localises to the cytoplasm. The enzyme catalyses alpha-D-xylose = alpha-D-xylulofuranose. This Haemophilus influenzae (strain PittEE) protein is Xylose isomerase.